The primary structure comprises 293 residues: 4-hydroxy-tetrahydrodipicolinate synthase (293 aa).

Pyruvate is bound at residue Thr-45. The active-site Proton donor/acceptor is Tyr-133. Lys-161 (schiff-base intermediate with substrate) is an active-site residue. Pyruvate is bound at residue Ile-203.

Belongs to the DapA family. As to quaternary structure, homotetramer; dimer of dimers.

The protein resides in the cytoplasm. The catalysed reaction is L-aspartate 4-semialdehyde + pyruvate = (2S,4S)-4-hydroxy-2,3,4,5-tetrahydrodipicolinate + H2O + H(+). Its pathway is amino-acid biosynthesis; L-lysine biosynthesis via DAP pathway; (S)-tetrahydrodipicolinate from L-aspartate: step 3/4. Functionally, catalyzes the condensation of (S)-aspartate-beta-semialdehyde [(S)-ASA] and pyruvate to 4-hydroxy-tetrahydrodipicolinate (HTPA). This is 4-hydroxy-tetrahydrodipicolinate synthase from Exiguobacterium sibiricum (strain DSM 17290 / CCUG 55495 / CIP 109462 / JCM 13490 / 255-15).